A 209-amino-acid chain; its full sequence is Protein-L-isoaspartate O-methyltransferase (209 aa).

The active site involves S55.

This sequence belongs to the methyltransferase superfamily. L-isoaspartyl/D-aspartyl protein methyltransferase family.

The protein localises to the cytoplasm. It carries out the reaction [protein]-L-isoaspartate + S-adenosyl-L-methionine = [protein]-L-isoaspartate alpha-methyl ester + S-adenosyl-L-homocysteine. In terms of biological role, catalyzes the methyl esterification of L-isoaspartyl residues in peptides and proteins that result from spontaneous decomposition of normal L-aspartyl and L-asparaginyl residues. It plays a role in the repair and/or degradation of damaged proteins. In Anaeromyxobacter dehalogenans (strain 2CP-C), this protein is Protein-L-isoaspartate O-methyltransferase.